The following is a 318-amino-acid chain: Tumor necrosis factor ligand superfamily member 11 (318 aa).

Residues 1 to 47 (MRRANRDYGKYLRGSEEMGSCPGVPHEGPLHPAPSAPAPAPPPAASR) are Cytoplasmic-facing. The tract at residues 13–41 (RGSEEMGSCPGVPHEGPLHPAPSAPAPAP) is disordered. A compositionally biased stretch (pro residues) spans 31 to 41 (HPAPSAPAPAP). The helical; Signal-anchor for type II membrane protein transmembrane segment at 48–68 (FMFLALLGLGLGQVVCSIALF) threads the bilayer. The Extracellular segment spans residues 69 to 318 (LYFRAQMDPN…FGAFKVQDID (250 aa)). The THD domain occupies 165–314 (PFAHLTINAA…DATYFGAFKV (150 aa)). N-linked (GlcNAc...) asparagine glycosylation is found at N199 and N264.

This sequence belongs to the tumor necrosis factor family. Homotrimer. Interacts with TNFRSF11A and TNFRSF11B. Interacts with FBN1 (via N-terminal domain) in a Ca(+2)-dependent manner. Interacts with TNFAIP6 (via both Link and CUB domains). Post-translationally, the soluble form derives from the membrane form by proteolytic processing. In terms of tissue distribution, highly expressed in thymus and bone tissues.

The protein localises to the cell membrane. The protein resides in the secreted. Functionally, cytokine that binds to TNFRSF11B/OPG and to TNFRSF11A/RANK. Osteoclast differentiation and activation factor. Augments the ability of dendritic cells to stimulate naive T-cell proliferation. May be an important regulator of interactions between T-cells and dendritic cells and may play a role in the regulation of the T-cell-dependent immune response. May also play an important role in enhanced bone-resorption in humoral hypercalcemia of malignancy. Induces osteoclastogenesis by activating multiple signaling pathways in osteoclast precursor cells, chief among which is induction of long lasting oscillations in the intracellular concentration of Ca (2+) resulting in the activation of NFATC1, which translocates to the nucleus and induces osteoclast-specific gene transcription to allow differentiation of osteoclasts. During osteoclast differentiation, in a TMEM64 and ATP2A2-dependent manner induces activation of CREB1 and mitochondrial ROS generation necessary for proper osteoclast generation. The sequence is that of Tumor necrosis factor ligand superfamily member 11 (Tnfsf11) from Rattus norvegicus (Rat).